An 83-amino-acid polypeptide reads, in one-letter code: Large ribosomal subunit protein uL24 (83 aa).

The protein belongs to the universal ribosomal protein uL24 family. As to quaternary structure, part of the 50S ribosomal subunit.

Functionally, one of two assembly initiator proteins, it binds directly to the 5'-end of the 23S rRNA, where it nucleates assembly of the 50S subunit. One of the proteins that surrounds the polypeptide exit tunnel on the outside of the subunit. The protein is Large ribosomal subunit protein uL24 of Symbiobacterium thermophilum (strain DSM 24528 / JCM 14929 / IAM 14863 / T).